The following is a 650-amino-acid chain: Phosphatidylinositol 4-kinase gamma 7 (650 aa).

Residues 46–103 (RRVFVQTETGCVLGMELDRSDNVHTVKRRLQIALNFPTEESSLTYGDMVLTNDLSAVR) form the Ubiquitin-like; degenerate domain. The PI3K/PI4K catalytic domain occupies 166–463 (GVEPLPVHSG…SVTERDVFSP (298 aa)). A G-loop region spans residues 172–178 (VHSGLGG). ATP contacts are provided by residues 173–179 (HSGLGGA), Lys194, and 283–286 (QKFV). The segment at 316–324 (FNTDRHGGN) is catalytic loop. An activation loop region spans residues 343-369 (PIDHGLCLPETLEDPYFEWIHWPQASL). Residue Asp345 participates in ATP binding. 2 disordered regions span residues 508–534 (SLGKLEESIKEEEEDEEEEEDKTENTV) and 560–595 (STSMKNTHLSDTTRKNPKPLTRGKSENTSSGHKSAN). Positions 516–529 (IKEEEEDEEEEEDK) are enriched in acidic residues. 2 stretches are compositionally biased toward polar residues: residues 560 to 569 (STSMKNTHLS) and 585 to 595 (ENTSSGHKSAN). Ser593 carries the phosphoserine modification.

The protein belongs to the PI3/PI4-kinase family. Type II PI4K subfamily.

The enzyme catalyses a 1,2-diacyl-sn-glycero-3-phospho-(1D-myo-inositol) + ATP = a 1,2-diacyl-sn-glycero-3-phospho-(1D-myo-inositol 4-phosphate) + ADP + H(+). In terms of biological role, the phosphorylation of phosphatidylinositol (PI) to PI4P is the first committed step in the generation of phosphatidylinositol 4,5-bisphosphate (PIP2), a precursor of the second messenger inositol 1,4,5-trisphosphate (InsP3). Undergoes autophosphorylation and phosphorylates serine/threonine residues of protein substrates. The polypeptide is Phosphatidylinositol 4-kinase gamma 7 (Arabidopsis thaliana (Mouse-ear cress)).